The chain runs to 128 residues: MSTFETGSIVKGFYKTGVYIGEITACRPQHYLVKVKAVLTHPAQGDLHHPKQADVPFFHERKALAYGEQTNIPHHMVKPYDGEVPDYTESLREATAQMRAKLNEDGSEWAKRSLHNLDILEKEYFNRP.

A signal peptide spans 1-25 (MSTFETGSIVKGFYKTGVYIGEITA). Cysteine 26 is lipidated: N-palmitoyl cysteine. Cysteine 26 carries S-diacylglycerol cysteine lipidation.

It localises to the cell membrane. Functionally, may play a role in the activation or the expression of KinB. The protein is Kinase-associated lipoprotein B (kapB) of Bacillus subtilis (strain 168).